Here is a 391-residue protein sequence, read N- to C-terminus: Tyrosine recombinase XerC-like (391 aa).

In terms of domain architecture, Core-binding (CB) spans 64–148; it reads VTLGDLMHTW…FLKTFFNYAV (85 aa). Residues 175–384 enclose the Tyr recombinase domain; it reads TEIETFSDEE…IPKQKTNAVE (210 aa). Catalysis depends on residues Arg-210, Lys-244, His-335, Arg-338, and His-361. The active-site O-(3'-phospho-DNA)-tyrosine intermediate is Tyr-371.

Belongs to the 'phage' integrase family.

The protein localises to the cytoplasm. In terms of biological role, site-specific tyrosine recombinase, which acts by catalyzing the cutting and rejoining of the recombining DNA molecules. This chain is Tyrosine recombinase XerC-like, found in Caldanaerobacter subterraneus subsp. tengcongensis (strain DSM 15242 / JCM 11007 / NBRC 100824 / MB4) (Thermoanaerobacter tengcongensis).